The sequence spans 231 residues: Ion-translocating oxidoreductase complex subunit E (231 aa).

Transmembrane regions (helical) follow at residues 18–38, 39–59, 69–89, 93–113, 127–147, and 182–202; these read GLVQ…LTNA, LGLG…VSLV, IPVF…FINA, GLYL…VIIG, STFD…VLGA, and TFLL…LIAL.

Belongs to the NqrDE/RnfAE family. As to quaternary structure, the complex is composed of six subunits: RnfA, RnfB, RnfC, RnfD, RnfE and RnfG.

Its subcellular location is the cell inner membrane. Part of a membrane-bound complex that couples electron transfer with translocation of ions across the membrane. In Shewanella piezotolerans (strain WP3 / JCM 13877), this protein is Ion-translocating oxidoreductase complex subunit E.